The following is a 345-amino-acid chain: D-erythrose-4-phosphate dehydrogenase (345 aa).

Residue Arg-11 to Ile-12 coordinates NAD(+). Substrate contacts are provided by residues Ser-158–Thr-160, Arg-204, Thr-217–Lys-218, and Arg-240. The active-site Nucleophile is Cys-159. Asn-322 contacts NAD(+).

It belongs to the glyceraldehyde-3-phosphate dehydrogenase family. Epd subfamily. Homotetramer.

It is found in the cytoplasm. The enzyme catalyses D-erythrose 4-phosphate + NAD(+) + H2O = 4-phospho-D-erythronate + NADH + 2 H(+). The protein operates within cofactor biosynthesis; pyridoxine 5'-phosphate biosynthesis; pyridoxine 5'-phosphate from D-erythrose 4-phosphate: step 1/5. Functionally, catalyzes the NAD-dependent conversion of D-erythrose 4-phosphate to 4-phosphoerythronate. The sequence is that of D-erythrose-4-phosphate dehydrogenase from Vibrio parahaemolyticus serotype O3:K6 (strain RIMD 2210633).